Consider the following 380-residue polypeptide: Acyl-lipid (9+3)-(E)-desaturase (380 aa).

The segment at 1–25 (MGAGGCISVSETKPNQKNSLERAPY) is disordered. Residues 9-18 (VSETKPNQKN) show a composition bias toward polar residues. 2 consecutive transmembrane segments (helical) span residues 52 to 72 (LSYV…TTYF) and 81 to 101 (ALAW…VWVI). A Histidine box-1 motif is present at residues 103 to 107 (HECGH). The Histidine box-2 motif lies at 139 to 143 (HRRHH). The next 3 helical transmembrane spans lie at 177 to 197 (IGVL…FNVS), 223 to 243 (IYLS…AAMV), and 247 to 267 (VWLI…LVLV). Residues 313–317 (HIVHH) carry the Histidine box-3 motif.

This sequence belongs to the fatty acid desaturase type 1 family.

Its subcellular location is the membrane. It carries out the reaction a (9Z)-octadecenoyl-containing glycerolipid + 2 Fe(II)-[cytochrome b5] + O2 + 2 H(+) = a (9Z,12E)-octadecadienoyl-containing glycerolipid + 2 Fe(III)-[cytochrome b5] + 2 H2O. It catalyses the reaction a (9Z)-hexadecenoyl-containing glycerolipid + 2 Fe(II)-[cytochrome b5] + O2 + 2 H(+) = a (9Z,12E)-hexadecadienoyl-containing glycerolipid + 2 Fe(III)-[cytochrome b5] + 2 H2O. Functionally, involved in the biosynthesis of dimorphecolic acid (9-OH-18:2(10E,12E)). Converts oleic acid (18:1(9Z)) into 18:2(9Z,12E) and probably palmitoleic acid (16:1(9Z)) into 16:2(9Z,12E). Very limited ability to catalyze (Z)-delta(12) desaturation. The chain is Acyl-lipid (9+3)-(E)-desaturase from Dimorphotheca sinuata (African daisy).